The sequence spans 232 residues: Ribose-5-phosphate isomerase A (232 aa).

Residues 29–32, 86–89, and 99–102 contribute to the substrate site; these read SGST, DGAD, and KGGG. The active-site Proton acceptor is the Glu-108. Lys-126 is a substrate binding site.

This sequence belongs to the ribose 5-phosphate isomerase family. In terms of assembly, homodimer.

The catalysed reaction is aldehydo-D-ribose 5-phosphate = D-ribulose 5-phosphate. It functions in the pathway carbohydrate degradation; pentose phosphate pathway; D-ribose 5-phosphate from D-ribulose 5-phosphate (non-oxidative stage): step 1/1. Catalyzes the reversible conversion of ribose-5-phosphate to ribulose 5-phosphate. The sequence is that of Ribose-5-phosphate isomerase A from Synechococcus sp. (strain ATCC 27144 / PCC 6301 / SAUG 1402/1) (Anacystis nidulans).